The chain runs to 133 residues: UPF0292 protein TON_0187 (133 aa).

A Toprim domain is found at E20–L100. 3 residues coordinate Mg(2+): E26, D69, and D71.

It belongs to the UPF0292 family. Mg(2+) serves as cofactor.

The polypeptide is UPF0292 protein TON_0187 (Thermococcus onnurineus (strain NA1)).